The sequence spans 492 residues: Cysteine--tRNA ligase (492 aa).

Cys-35 contributes to the Zn(2+) binding site. The 'HIGH' region signature appears at 37-47 (PTVYSNVHLGN). Zn(2+)-binding residues include Cys-230, His-255, and Glu-259. The short motif at 287 to 291 (KMAKS) is the 'KMSKS' region element. Lys-290 is a binding site for ATP.

It belongs to the class-I aminoacyl-tRNA synthetase family. In terms of assembly, monomer. Zn(2+) is required as a cofactor.

It is found in the cytoplasm. It catalyses the reaction tRNA(Cys) + L-cysteine + ATP = L-cysteinyl-tRNA(Cys) + AMP + diphosphate. This Flavobacterium johnsoniae (strain ATCC 17061 / DSM 2064 / JCM 8514 / BCRC 14874 / CCUG 350202 / NBRC 14942 / NCIMB 11054 / UW101) (Cytophaga johnsonae) protein is Cysteine--tRNA ligase.